A 452-amino-acid chain; its full sequence is Trigger factor (452 aa).

The region spanning 171–256 is the PPIase FKBP-type domain; sequence GDRVKVNFKG…ATAIETPEEK (86 aa).

It belongs to the FKBP-type PPIase family. Tig subfamily.

The protein localises to the cytoplasm. It carries out the reaction [protein]-peptidylproline (omega=180) = [protein]-peptidylproline (omega=0). Involved in protein export. Acts as a chaperone by maintaining the newly synthesized protein in an open conformation. Functions as a peptidyl-prolyl cis-trans isomerase. This is Trigger factor from Bradyrhizobium sp. (strain BTAi1 / ATCC BAA-1182).